The primary structure comprises 550 residues: C-type lectin domain family 4 member F (550 aa).

The Cytoplasmic segment spans residues 1 to 42; it reads MKEAELNRDVAKFCTDNQCVILQPQGLGPKSAAPMAPRTLRH. A helical; Signal-anchor for type II membrane protein transmembrane segment spans residues 43–69; sequence VQAIVALVVVTVFFSLLALFVVVLQPW. The Extracellular segment spans residues 70 to 550; sequence RQKQNEDHPV…DWSVARTDQS (481 aa). Asn87, Asn93, Asn115, Asn132, Asn209, and Asn255 each carry an N-linked (GlcNAc...) asparagine glycan. The C-type lectin domain occupies 438–538; that stretch reads NFCVSQGAHL…GTAYNWVCKK (101 aa). Cystine bridges form between Cys440–Cys536 and Cys516–Cys528.

As to expression, kupffer cells.

The protein localises to the membrane. Functionally, receptor with an affinity for galactose and fucose. Could be involved in endocytosis. The polypeptide is C-type lectin domain family 4 member F (Clec4f) (Rattus norvegicus (Rat)).